A 1423-amino-acid polypeptide reads, in one-letter code: DNA-directed RNA polymerase, mitochondrial (1423 aa).

The transit peptide at methionine 1–leucine 73 directs the protein to the mitochondrion. Residues asparagine 266–glutamine 303 are disordered. Residues glutamine 278–glutamine 297 show a composition bias toward low complexity. Catalysis depends on residues aspartate 901 and lysine 970. A compositionally biased stretch (basic and acidic residues) spans glutamate 1055–histidine 1064. The tract at residues glutamate 1055–lysine 1087 is disordered. The active site involves aspartate 1180. The tract at residues valine 1316 to histidine 1342 is disordered. Over residues methionine 1322–glutamate 1336 the composition is skewed to acidic residues.

This sequence belongs to the phage and mitochondrial RNA polymerase family.

It localises to the mitochondrion. The catalysed reaction is RNA(n) + a ribonucleoside 5'-triphosphate = RNA(n+1) + diphosphate. Functionally, DNA-dependent RNA polymerase catalyzes the transcription of DNA into RNA using the four ribonucleoside triphosphates as substrates. In Neurospora crassa (strain ATCC 24698 / 74-OR23-1A / CBS 708.71 / DSM 1257 / FGSC 987), this protein is DNA-directed RNA polymerase, mitochondrial (cyt-5).